The sequence spans 501 residues: MPFSADSVTSLRQLADALAARSVSAEELAREYLARIEQAAALNAFIHVDAERTLAQARAADERRARGEAAPLTGVPIAHKDVFVTRGWRATAGSKMLANYESPFDATVVERMAAAGMVTLGKTNMDEFAMGSSNENSHFGPVRNPWDTSRVPGGSSGGSAAAVAAGLAPAATGTDTGGSIRQPSSFSGITGIKPTYGRVSRYGMIAFASSLDQAGPMAHSAEDCALLLNAMAGFDPRDSTSITPAQGGVDEDYTRLLGQPRAGATTERPLAGLRIGLPKEYFGKGLSADVEQAVRAALAEYEKLGATLVEVTLPKTELSIPVYYVIAPAEASSNLSRFDGVRYGHRAAEYRDLLDMYKKSRAEGFGAEVKRRIMVGTYVLSHGYYDAYYLQAQKIRRIIADDFQRAFAQCDVIMGPVAPTVAWKLGEKTSDPVQMYLADIFTLSTSLAGLPGMSVPCGFGEAGMPVGLQLIGNYFDEARLLQTAHAFQQATDWHLRRPGKA.

Active-site charge relay system residues include Lys-80 and Ser-155. Ser-179 (acyl-ester intermediate) is an active-site residue.

This sequence belongs to the amidase family. GatA subfamily. In terms of assembly, heterotrimer of A, B and C subunits.

It carries out the reaction L-glutamyl-tRNA(Gln) + L-glutamine + ATP + H2O = L-glutaminyl-tRNA(Gln) + L-glutamate + ADP + phosphate + H(+). Its function is as follows. Allows the formation of correctly charged Gln-tRNA(Gln) through the transamidation of misacylated Glu-tRNA(Gln) in organisms which lack glutaminyl-tRNA synthetase. The reaction takes place in the presence of glutamine and ATP through an activated gamma-phospho-Glu-tRNA(Gln). The protein is Glutamyl-tRNA(Gln) amidotransferase subunit A of Cupriavidus necator (strain ATCC 17699 / DSM 428 / KCTC 22496 / NCIMB 10442 / H16 / Stanier 337) (Ralstonia eutropha).